The following is a 198-amino-acid chain: Suppressor of cytokine signaling 2 (198 aa).

The disordered stretch occupies residues 1–29 (MTLRCLEPSGNGADRTRSQWGTAGLPEEQ). The tract at residues 1–75 (MTLRCLEPSG…PEGTFLIRDS (75 aa)) is interaction with AREL1. The residue at position 30 (Ser30) is a Phosphoserine. The region spanning 48–156 (WYWGSMTVNE…TVHLYLTKPL (109 aa)) is the SH2 domain. Ser52 carries the post-translational modification Phosphoserine; by PKC. The SOCS box domain maps to 151-197 (YLTKPLYTSAPTLQHFCRLAINKCTGTIWGLPLPTRLKDYLEEYKFQ). Lys173 is covalently cross-linked (Glycyl lysine isopeptide (Lys-Gly) (interchain with G-Cter in ubiquitin)).

In terms of assembly, substrate-recognition component of the ECS(SOCS2) complex, composed of SOCS2, CUL5, ELOB, ELOC and RNF7/RBX2. Interacts with IGF1R. Interacts with DCUN1D1. In terms of processing, ubiquitinated; mediated by AREL1 and leading to its subsequent proteasomal degradation. Ubiquitination is dependent on phosphorylation at Ser-52, by PKC and is stimulated by LPS. Post-translationally, phosphorylation at Ser-52 by PKC facilitates its ubiquitination and proteasomal degradation. Expressed primarily in the testis, some expression in liver and lung.

The protein resides in the cytoplasm. The protein operates within protein modification; protein ubiquitination. Functionally, substrate-recognition component of a cullin-5-RING E3 ubiquitin-protein ligase complex (ECS complex, also named CRL5 complex), which mediates the ubiquitination and subsequent proteasomal degradation of target proteins, such as EPOR and GHR. Specifically recognizes and binds phosphorylated proteins via its SH2 domain, promoting their ubiquitination. The ECS(SOCS2) complex acts as a key regulator of growth hormone receptor (GHR) levels by mediating ubiquitination and degradation of GHR, following GHR phosphorylation by JAK2. The ECS(SOCS2) also catalyzes ubiquitination and degradation of JAK2-phosphorylated EPOR. The polypeptide is Suppressor of cytokine signaling 2 (Mus musculus (Mouse)).